We begin with the raw amino-acid sequence, 447 residues long: DNA primase DnaG (447 aa).

In terms of domain architecture, Toprim spans Asp-200–Glu-274. Glu-206, Asp-248, and Asp-250 together coordinate Mg(2+). The interval Glu-316–Val-339 is disordered.

It belongs to the archaeal DnaG primase family. In terms of assembly, forms a ternary complex with MCM helicase and DNA. Component of the archaeal exosome complex. Mg(2+) serves as cofactor.

It carries out the reaction ssDNA + n NTP = ssDNA/pppN(pN)n-1 hybrid + (n-1) diphosphate.. In terms of biological role, RNA polymerase that catalyzes the synthesis of short RNA molecules used as primers for DNA polymerase during DNA replication. Also part of the exosome, which is a complex involved in RNA degradation. Acts as a poly(A)-binding protein that enhances the interaction between heteromeric, adenine-rich transcripts and the exosome. In Pyrococcus furiosus (strain ATCC 43587 / DSM 3638 / JCM 8422 / Vc1), this protein is DNA primase DnaG.